We begin with the raw amino-acid sequence, 213 residues long: Holliday junction resolvase RecU (213 aa).

The Mg(2+) site is built by Thr-99, Asp-101, Glu-114, and Gln-133.

The protein belongs to the RecU family. It depends on Mg(2+) as a cofactor.

It is found in the cytoplasm. The catalysed reaction is Endonucleolytic cleavage at a junction such as a reciprocal single-stranded crossover between two homologous DNA duplexes (Holliday junction).. Endonuclease that resolves Holliday junction intermediates in genetic recombination. Cleaves mobile four-strand junctions by introducing symmetrical nicks in paired strands. Promotes annealing of linear ssDNA with homologous dsDNA. Required for DNA repair, homologous recombination and chromosome segregation. The polypeptide is Holliday junction resolvase RecU (Lactococcus lactis subsp. lactis (strain IL1403) (Streptococcus lactis)).